Reading from the N-terminus, the 359-residue chain is Probable dual-specificity RNA methyltransferase RlmN (359 aa).

The Proton acceptor role is filled by Glu100. Residues 106–340 enclose the Radical SAM core domain; sequence TDKRLTVCVS…VSVRASRGRD (235 aa). The cysteines at positions 113 and 345 are disulfide-linked. [4Fe-4S] cluster contacts are provided by Cys120, Cys124, and Cys127. S-adenosyl-L-methionine-binding positions include 167 to 168, Ser197, 226 to 228, and Asn302; these read GE and SLH. The S-methylcysteine intermediate role is filled by Cys345.

Belongs to the radical SAM superfamily. RlmN family. Requires [4Fe-4S] cluster as cofactor.

Its subcellular location is the cytoplasm. It carries out the reaction adenosine(2503) in 23S rRNA + 2 reduced [2Fe-2S]-[ferredoxin] + 2 S-adenosyl-L-methionine = 2-methyladenosine(2503) in 23S rRNA + 5'-deoxyadenosine + L-methionine + 2 oxidized [2Fe-2S]-[ferredoxin] + S-adenosyl-L-homocysteine. The enzyme catalyses adenosine(37) in tRNA + 2 reduced [2Fe-2S]-[ferredoxin] + 2 S-adenosyl-L-methionine = 2-methyladenosine(37) in tRNA + 5'-deoxyadenosine + L-methionine + 2 oxidized [2Fe-2S]-[ferredoxin] + S-adenosyl-L-homocysteine. Its function is as follows. Specifically methylates position 2 of adenine 2503 in 23S rRNA and position 2 of adenine 37 in tRNAs. This is Probable dual-specificity RNA methyltransferase RlmN from Prochlorococcus marinus (strain NATL2A).